A 331-amino-acid chain; its full sequence is dTDP-glucose 4,6-dehydratase (331 aa).

NAD(+)-binding positions include 11-12 (FI), 33-36 (DALT), 57-58 (DI), 77-81 (FAAET), and Ser96. A substrate-binding site is contributed by Thr81. Thr120 lines the substrate pocket. Asp121 functions as the Proton donor in the catalytic mechanism. Active-site proton acceptor residues include Glu122 and Tyr147. Residue 147 to 151 (YSSTK) coordinates NAD(+). Asn176 is a substrate binding site. An NAD(+)-binding site is contributed by Asn177. Substrate is bound by residues 186-191 (KFIPRQ), 202-204 (KLY), Arg211, Asn246, and 269-273 (DRAGH).

The protein belongs to the NAD(P)-dependent epimerase/dehydratase family. dTDP-glucose dehydratase subfamily. In terms of assembly, homodimer. It depends on NAD(+) as a cofactor.

The enzyme catalyses dTDP-alpha-D-glucose = dTDP-4-dehydro-6-deoxy-alpha-D-glucose + H2O. The protein operates within carbohydrate biosynthesis; dTDP-L-rhamnose biosynthesis. Catalyzes the dehydration of dTDP-D-glucose to form dTDP-6-deoxy-D-xylo-4-hexulose via a three-step process involving oxidation, dehydration and reduction. Involved in the biosynthesis of the dTDP-L-rhamnose which is a component of the critical linker, D-N-acetylglucosamine-L-rhamnose disaccharide, which connects the galactan region of arabinogalactan to peptidoglycan via a phosphodiester linkage. The protein is dTDP-glucose 4,6-dehydratase (rmlB) of Mycolicibacterium smegmatis (strain ATCC 700084 / mc(2)155) (Mycobacterium smegmatis).